The chain runs to 212 residues: Ribosomal RNA small subunit methyltransferase G (212 aa).

S-adenosyl-L-methionine-binding positions include G80, L85, 131 to 132, and R146; that span reads AE.

This sequence belongs to the methyltransferase superfamily. RNA methyltransferase RsmG family.

The protein resides in the cytoplasm. It carries out the reaction guanosine(527) in 16S rRNA + S-adenosyl-L-methionine = N(7)-methylguanosine(527) in 16S rRNA + S-adenosyl-L-homocysteine. Specifically methylates the N7 position of guanine in position 527 of 16S rRNA. The protein is Ribosomal RNA small subunit methyltransferase G of Stenotrophomonas maltophilia (strain K279a).